A 351-amino-acid chain; its full sequence is MKLQWWQGPCQPLDHVARTKAESRQQQLTKPAGSLGRLEKLAIHLAALQGRERPSLDKLWIAIFAGDHGVVAEGVSAYPQAVTGQMLANFVSGGAAISVLARELDAALEVIDLGTAEPLPPLPGVRHLYVGAGTQNLAREPAMTLSQLLICLEAGRDSLLRARAVGCDLFVGGEMGIGNTTAAAALACWLLGCPASELAGPGTGLDGAGVAHKARVIDAALALHHAQIDGPLQALVHLGGFEIAALTGAYLAAAQQGIAVLVDGFICSVAALLAVRLNPGCRDWLLFAHHGAEPGHVRVLQALGAEPLLELGLRLGEGSGAALAVPLLRLACSLHGQMATFAEAAVAQRPQ.

Glu317 (proton acceptor) is an active-site residue.

It belongs to the CobT family.

The enzyme catalyses 5,6-dimethylbenzimidazole + nicotinate beta-D-ribonucleotide = alpha-ribazole 5'-phosphate + nicotinate + H(+). Its pathway is nucleoside biosynthesis; alpha-ribazole biosynthesis; alpha-ribazole from 5,6-dimethylbenzimidazole: step 1/2. In terms of biological role, catalyzes the synthesis of alpha-ribazole-5'-phosphate from nicotinate mononucleotide (NAMN) and 5,6-dimethylbenzimidazole (DMB). The chain is Nicotinate-nucleotide--dimethylbenzimidazole phosphoribosyltransferase from Ectopseudomonas mendocina (strain ymp) (Pseudomonas mendocina).